The chain runs to 257 residues: Hydroxyacylglutathione hydrolase (257 aa).

Residues His-54, His-56, Asp-58, His-59, His-113, Asp-137, and His-175 each coordinate Zn(2+).

This sequence belongs to the metallo-beta-lactamase superfamily. Glyoxalase II family. In terms of assembly, monomer. Requires Zn(2+) as cofactor.

It carries out the reaction an S-(2-hydroxyacyl)glutathione + H2O = a 2-hydroxy carboxylate + glutathione + H(+). Its pathway is secondary metabolite metabolism; methylglyoxal degradation; (R)-lactate from methylglyoxal: step 2/2. Functionally, thiolesterase that catalyzes the hydrolysis of S-D-lactoyl-glutathione to form glutathione and D-lactic acid. The chain is Hydroxyacylglutathione hydrolase from Synechocystis sp. (strain ATCC 27184 / PCC 6803 / Kazusa).